Consider the following 172-residue polypeptide: Cytidylate kinase (172 aa).

Residue 4-12 (GPPGSGKST) participates in ATP binding.

This sequence belongs to the cytidylate kinase family. Type 2 subfamily.

Its subcellular location is the cytoplasm. It catalyses the reaction CMP + ATP = CDP + ADP. It carries out the reaction dCMP + ATP = dCDP + ADP. The polypeptide is Cytidylate kinase (cmk) (Aeropyrum pernix (strain ATCC 700893 / DSM 11879 / JCM 9820 / NBRC 100138 / K1)).